Reading from the N-terminus, the 261-residue chain is Putative hydro-lyase Sfum_3393 (261 aa).

The protein belongs to the D-glutamate cyclase family.

This is Putative hydro-lyase Sfum_3393 from Syntrophobacter fumaroxidans (strain DSM 10017 / MPOB).